The chain runs to 150 residues: Large ribosomal subunit protein bL9 (150 aa).

The protein belongs to the bacterial ribosomal protein bL9 family.

Binds to the 23S rRNA. The sequence is that of Large ribosomal subunit protein bL9 from Streptococcus agalactiae serotype III (strain NEM316).